The primary structure comprises 192 residues: MLLTVSGPPGAGKSTTADTLAATFGLEHVSGGDIFRELAAERGLTAVELNQQAEEDDQIDRDLDQRLRTIALERDDILLESRLAGWLAGDAADIRVWLDAPLNVRAGRIADREDKSISTAQEETRTREESEALRYQNYYNIDIHDHSIYDLRVNTARWPKTEVPDILEAAIAAYEPASDEGRFPIEDIIYDF.

7–15 (GPPGAGKST) contacts ATP.

Belongs to the cytidylate kinase family. Type 2 subfamily.

It localises to the cytoplasm. The enzyme catalyses CMP + ATP = CDP + ADP. The catalysed reaction is dCMP + ATP = dCDP + ADP. This chain is Cytidylate kinase, found in Haloquadratum walsbyi (strain DSM 16790 / HBSQ001).